The sequence spans 292 residues: DCN1-like protein 4 (292 aa).

The segment at 43–83 (HQTGSLRSCSSSDCFNKVMPPRKKRRPASGDDLSAKKSRHD) is disordered. A compositionally biased stretch (polar residues) spans 45–56 (TGSLRSCSSSDC). Lysine 95 is covalently cross-linked (Glycyl lysine isopeptide (Lys-Gly) (interchain with G-Cter in SUMO2)). The DCUN1 domain occupies 101–287 (FSSKRCLEWF…LLDEFVEWYK (187 aa)).

Interacts (via the DCUN1 domain) with the unneddylated cullins: interacts with CUL1, CUL2, CUL3, CUL4A, CUL4B and CUL5; these interactions promote the cullin neddylation and the identity of the cullin dictates the affinity of the interaction. Interacts with RBX1 and RNF7. Interacts with CAND1; this interaction is bridged by cullins such as CUL3 and strongly inhibits the neddylation of CUL3. These CAND-cullin-DCNL complexes can only be neddylated in the presence of a substrate adapter. Interacts (via DCUN1 domain) with UBE2M (N-terminally acetylated form) and probably with UBE2F (N-terminally acetylated form).

The protein resides in the nucleus. Functionally, contributes to the neddylation of all cullins by transferring NEDD8 from N-terminally acetylated NEDD8-conjugating E2s enzyme to different cullin C-terminal domain-RBX complexes which are necessary for the activation of cullin-RING E3 ubiquitin ligases (CRLs). This Homo sapiens (Human) protein is DCN1-like protein 4.